Consider the following 331-residue polypeptide: Ketol-acid reductoisomerase (NADP(+)) (331 aa).

A KARI N-terminal Rossmann domain is found at 2 to 182; that stretch reads AQLFYDSDAD…GGTRAGILET (181 aa). NADP(+)-binding positions include 25–28, S51, S53, and 83–86; these read YGSQ and DEFQ. The active site involves H108. NADP(+) is bound at residue G134. In terms of domain architecture, KARI C-terminal knotted spans 183 to 328; that stretch reads NFKEETETDL…KGLRAMFSWL (146 aa). 4 residues coordinate Mg(2+): D191, E195, E227, and E231. Substrate is bound at residue S252.

This sequence belongs to the ketol-acid reductoisomerase family. Mg(2+) is required as a cofactor.

The enzyme catalyses (2R)-2,3-dihydroxy-3-methylbutanoate + NADP(+) = (2S)-2-acetolactate + NADPH + H(+). It carries out the reaction (2R,3R)-2,3-dihydroxy-3-methylpentanoate + NADP(+) = (S)-2-ethyl-2-hydroxy-3-oxobutanoate + NADPH + H(+). It participates in amino-acid biosynthesis; L-isoleucine biosynthesis; L-isoleucine from 2-oxobutanoate: step 2/4. Its pathway is amino-acid biosynthesis; L-valine biosynthesis; L-valine from pyruvate: step 2/4. In terms of biological role, involved in the biosynthesis of branched-chain amino acids (BCAA). Catalyzes an alkyl-migration followed by a ketol-acid reduction of (S)-2-acetolactate (S2AL) to yield (R)-2,3-dihydroxy-isovalerate. In the isomerase reaction, S2AL is rearranged via a Mg-dependent methyl migration to produce 3-hydroxy-3-methyl-2-ketobutyrate (HMKB). In the reductase reaction, this 2-ketoacid undergoes a metal-dependent reduction by NADPH to yield (R)-2,3-dihydroxy-isovalerate. This Prochlorococcus marinus (strain MIT 9303) protein is Ketol-acid reductoisomerase (NADP(+)).